Here is a 559-residue protein sequence, read N- to C-terminus: Cellulose biosynthesis protein BcsG (559 aa).

4 helical membrane-spanning segments follow: residues 34-54 (LLWAGYLNFHPLLNLVFAAFL), 68-88 (HWIALPIGFALFWHDTWLPGP), 113-133 (FINWQMIGAIFVLLVAWLFLS), and 138-158 (ITVFVVAILLWLNVLTLAGPS).

The protein localises to the cell inner membrane. The chain is Cellulose biosynthesis protein BcsG (bcsG) from Escherichia coli (strain K12).